Reading from the N-terminus, the 217-residue chain is Elongation factor Ts (217 aa).

Positions 80-83 (TDFV) are involved in Mg(2+) ion dislocation from EF-Tu.

This sequence belongs to the EF-Ts family.

The protein resides in the cytoplasm. In terms of biological role, associates with the EF-Tu.GDP complex and induces the exchange of GDP to GTP. It remains bound to the aminoacyl-tRNA.EF-Tu.GTP complex up to the GTP hydrolysis stage on the ribosome. In Carboxydothermus hydrogenoformans (strain ATCC BAA-161 / DSM 6008 / Z-2901), this protein is Elongation factor Ts.